Consider the following 88-residue polypeptide: Small ribosomal subunit protein bS18 (88 aa).

This sequence belongs to the bacterial ribosomal protein bS18 family. Part of the 30S ribosomal subunit. Forms a tight heterodimer with protein bS6.

Its function is as follows. Binds as a heterodimer with protein bS6 to the central domain of the 16S rRNA, where it helps stabilize the platform of the 30S subunit. In Aliarcobacter butzleri (strain RM4018) (Arcobacter butzleri), this protein is Small ribosomal subunit protein bS18.